A 297-amino-acid chain; its full sequence is ATP phosphoribosyltransferase (297 aa).

Position 1 is an N-acetylmethionine (methionine 1).

Belongs to the ATP phosphoribosyltransferase family.

The protein resides in the cytoplasm. It carries out the reaction 1-(5-phospho-beta-D-ribosyl)-ATP + diphosphate = 5-phospho-alpha-D-ribose 1-diphosphate + ATP. The protein operates within amino-acid biosynthesis; L-histidine biosynthesis; L-histidine from 5-phospho-alpha-D-ribose 1-diphosphate: step 1/9. Functionally, catalyzes the condensation of ATP and 5-phosphoribose 1-diphosphate to form N'-(5'-phosphoribosyl)-ATP (PR-ATP). Has a crucial role in the pathway because the rate of histidine biosynthesis seems to be controlled primarily by regulation of the enzymatic activity. This is ATP phosphoribosyltransferase (HIS1) from Saccharomyces cerevisiae (strain ATCC 204508 / S288c) (Baker's yeast).